The chain runs to 441 residues: Mitochondrial distribution and morphology protein 12 (441 aa).

One can recognise an SMP-LTD domain in the interval 1 to 441 (MSIDIDWERA…VYPSFWTFLV (441 aa)). The segment at 180-289 (TPLRAVTRGN…SGTPPRRMRE (110 aa)) is disordered. Composition is skewed to polar residues over residues 226 to 245 (SRPSTANTGNTLFSRGSVST) and 253 to 263 (SSQTVLANNPG).

It belongs to the MDM12 family. In terms of assembly, component of the ER-mitochondria encounter structure (ERMES) or MDM complex, composed of MMM1, MDM10, MDM12 and MDM34. An MMM1 homodimer associates with one molecule of MDM12 on each side in a pairwise head-to-tail manner, and the SMP-LTD domains of MMM1 and MDM12 generate a continuous hydrophobic tunnel for phospholipid trafficking.

The protein resides in the mitochondrion outer membrane. The protein localises to the endoplasmic reticulum membrane. In terms of biological role, component of the ERMES/MDM complex, which serves as a molecular tether to connect the endoplasmic reticulum (ER) and mitochondria. Components of this complex are involved in the control of mitochondrial shape and protein biogenesis, and function in nonvesicular lipid trafficking between the ER and mitochondria. MDM12 is required for the interaction of the ER-resident membrane protein MMM1 and the outer mitochondrial membrane-resident beta-barrel protein MDM10. The MDM12-MMM1 subcomplex functions in the major beta-barrel assembly pathway that is responsible for biogenesis of all mitochondrial outer membrane beta-barrel proteins, and acts in a late step after the SAM complex. The MDM10-MDM12-MMM1 subcomplex further acts in the TOM40-specific pathway after the action of the MDM12-MMM1 complex. Essential for establishing and maintaining the structure of mitochondria and maintenance of mtDNA nucleoids. The polypeptide is Mitochondrial distribution and morphology protein 12 (Paracoccidioides brasiliensis (strain Pb18)).